A 223-amino-acid polypeptide reads, in one-letter code: Ribose-5-phosphate isomerase A (223 aa).

Substrate-binding positions include 32–35 (TGST), 85–88 (DGAD), and 98–101 (KGGG). The active-site Proton acceptor is glutamate 107. Position 125 (lysine 125) interacts with substrate.

This sequence belongs to the ribose 5-phosphate isomerase family. As to quaternary structure, homodimer.

It carries out the reaction aldehydo-D-ribose 5-phosphate = D-ribulose 5-phosphate. The protein operates within carbohydrate degradation; pentose phosphate pathway; D-ribose 5-phosphate from D-ribulose 5-phosphate (non-oxidative stage): step 1/1. Functionally, catalyzes the reversible conversion of ribose-5-phosphate to ribulose 5-phosphate. The polypeptide is Ribose-5-phosphate isomerase A (Pseudomonas syringae pv. syringae (strain B728a)).